A 285-amino-acid polypeptide reads, in one-letter code: Inositol oxygenase (285 aa).

Substrate is bound at residue R29. S33 is subject to Phosphoserine. Substrate is bound at residue 85-88 (DESD). 3 residues coordinate Fe cation: H98, H123, and D124. Residues K127 and 141–142 (GD) contribute to the substrate site. Fe cation-binding residues include H194, H220, and D253. 220 to 221 (HS) provides a ligand contact to substrate.

This sequence belongs to the myo-inositol oxygenase family. Requires Fe cation as cofactor. As to expression, kidney specific. Renal proximal tubules.

It is found in the cytoplasm. The enzyme catalyses myo-inositol + O2 = D-glucuronate + H2O + H(+). Its pathway is polyol metabolism; myo-inositol degradation into D-glucuronate; D-glucuronate from myo-inositol: step 1/1. This chain is Inositol oxygenase (Miox), found in Mus musculus (Mouse).